The primary structure comprises 585 residues: Serine protease HtrA-like (585 aa).

The interval 1–184 (MDNNKKQVIP…QPKDKDNDNT (184 aa)) is disordered. Positions 21–82 (YFHNVEREER…IHQQRDDKSY (62 aa)) are enriched in basic and acidic residues. Positions 84 to 94 (QKTLNQNNQMN) are enriched in polar residues. The span at 95–113 (KSKDDDNKIGEESLHDVRV) shows a compositional bias: basic and acidic residues. Over residues 114-124 (SSDTSTLPHQN) the composition is skewed to polar residues. Basic and acidic residues predominate over residues 126–139 (SIKDYDDSGNESKQ). The segment covering 151–175 (GVNSNHTEQDSRSTQPYSSKHSYSQ) has biased composition (polar residues). Residues 224-244 (MLIIIGIIVLLLILNAIFTTV) traverse the membrane as a helical segment. Catalysis depends on charge relay system residues histidine 320, aspartate 350, and serine 435. The PDZ domain maps to 516-575 (GVLIGEVKENGLGDKAGLKKGDVIVELDGKKIEDNLRYRQVIYSHYDDQKTITAKIYRNG).

Belongs to the peptidase S1C family.

It is found in the cell membrane. In Staphylococcus epidermidis (strain ATCC 35984 / DSM 28319 / BCRC 17069 / CCUG 31568 / BM 3577 / RP62A), this protein is Serine protease HtrA-like.